The following is a 326-amino-acid chain: NAD-dependent protein deacylase SIR5 (326 aa).

The N-terminal 26 residues, 1–26, are a transit peptide targeting the mitochondrion; sequence MRLLRPTPRLSSIFSSKTATSNLRFF. A Deacetylase sirtuin-type domain is found at 28–324; the sequence is AMAPHNDVGA…IGKLETDKKE (297 aa). 53–72 contributes to the NAD(+) binding site; it reads GAGLSASSGLPTFRGAGGLW. Substrate-binding residues include tyrosine 97 and arginine 100. The Proton acceptor role is filled by histidine 151. Cysteine 159, cysteine 162, cysteine 211, and cysteine 214 together coordinate Zn(2+).

The protein belongs to the sirtuin family. Class I subfamily. In terms of assembly, interacts with LAT1; the interaction is direct. It depends on Zn(2+) as a cofactor.

It is found in the mitochondrion. It localises to the cytoplasm. The protein resides in the cytosol. Its subcellular location is the nucleus. The protein localises to the chromosome. It carries out the reaction N(6)-acetyl-L-lysyl-[protein] + NAD(+) + H2O = 2''-O-acetyl-ADP-D-ribose + nicotinamide + L-lysyl-[protein]. The enzyme catalyses N(6)-(2E)-butenoyl-L-lysyl-[protein] + H2O = (2E)-2-butenoate + L-lysyl-[protein]. Functionally, NAD-dependent protein-lysine deacylase that decrotonylates the PDC (pyruvate dehydrogenase complex) subunit LAT1 at 'Lys-148' to inhibit PDC activity and consequently ATP production. Also decrotonylates histone H3 crotonylated at 'Lys-18' (H3K18cr), to repress the expression of genes involved in aerobic respiration. May also act as a NAD-dependent deacetylase. Does not mediate desuccinylation, demalonylation, or deglutarylation of LAT1. The chain is NAD-dependent protein deacylase SIR5 from Fusarium oxysporum f. sp. lycopersici (strain 4287 / CBS 123668 / FGSC 9935 / NRRL 34936) (Fusarium vascular wilt of tomato).